Consider the following 345-residue polypeptide: Dihydroorotate dehydrogenase (quinone) (345 aa).

FMN is bound by residues 65 to 69 (AGLDK) and threonine 89. Lysine 69 is a substrate binding site. Residue 114-118 (NRMGF) coordinates substrate. FMN-binding residues include asparagine 142 and asparagine 175. Asparagine 175 lines the substrate pocket. The Nucleophile role is filled by serine 178. Asparagine 180 is a substrate binding site. Positions 220 and 248 each coordinate FMN. 249–250 (NT) serves as a coordination point for substrate. FMN is bound by residues glycine 271, glycine 300, and 321 to 322 (YT).

This sequence belongs to the dihydroorotate dehydrogenase family. Type 2 subfamily. Monomer. It depends on FMN as a cofactor.

It localises to the cell membrane. It catalyses the reaction (S)-dihydroorotate + a quinone = orotate + a quinol. It participates in pyrimidine metabolism; UMP biosynthesis via de novo pathway; orotate from (S)-dihydroorotate (quinone route): step 1/1. In terms of biological role, catalyzes the conversion of dihydroorotate to orotate with quinone as electron acceptor. The protein is Dihydroorotate dehydrogenase (quinone) of Burkholderia ambifaria (strain ATCC BAA-244 / DSM 16087 / CCUG 44356 / LMG 19182 / AMMD) (Burkholderia cepacia (strain AMMD)).